Consider the following 296-residue polypeptide: Cholesterol ring-cleaving hydrolase IpdA subunit (296 aa).

Belongs to the 3-oxoacid CoA-transferase subunit A family. As to quaternary structure, heterotetramer composed of 2 IpdA subunits and 2 IpdB subunits.

The enzyme catalyses (3E)-2-(2-carboxylatoethyl)-3-methyl-6-oxocyclohex-1-ene-1-carboxyl-CoA + H2O = 6-methyl-3,7-dioxodecanedioyl-CoA. The protein operates within steroid metabolism; cholesterol degradation. Functionally, involved in the final steps of cholesterol and steroid degradation. Opens the last steroid ring of cholesterol by catalyzing the hydrolysis of (3E)-2-(2-carboxylatoethyl)-3-methyl-6-oxocyclohex-1-ene-1-carboxyl-CoA (COCHEA-CoA) to 6-methyl-3,7-dioxodecanedioyl-CoA (MeDODA-CoA). This Rhodococcus jostii (strain RHA1) protein is Cholesterol ring-cleaving hydrolase IpdA subunit.